The primary structure comprises 459 residues: Cysteine--tRNA ligase (459 aa).

Position 29 (Cys-29) interacts with Zn(2+). The 'HIGH' region motif lies at 31 to 41; sequence VTTYDYCHIGH. Zn(2+) is bound by residues Cys-210, His-235, and Glu-239. The short motif at 267–271 is the 'KMSKS' region element; sequence KMSKS. ATP is bound at residue Lys-270.

The protein belongs to the class-I aminoacyl-tRNA synthetase family. In terms of assembly, monomer. Zn(2+) is required as a cofactor.

The protein resides in the cytoplasm. The catalysed reaction is tRNA(Cys) + L-cysteine + ATP = L-cysteinyl-tRNA(Cys) + AMP + diphosphate. The chain is Cysteine--tRNA ligase from Idiomarina loihiensis (strain ATCC BAA-735 / DSM 15497 / L2-TR).